We begin with the raw amino-acid sequence, 82 residues long: Cytochrome b559 subunit alpha (82 aa).

The chain crosses the membrane as a helical span at residues Ile-22–Phe-36. A heme-binding site is contributed by His-24.

It belongs to the PsbE/PsbF family. In terms of assembly, heterodimer of an alpha subunit and a beta subunit. PSII is composed of 1 copy each of membrane proteins PsbA, PsbB, PsbC, PsbD, PsbE, PsbF, PsbH, PsbI, PsbJ, PsbK, PsbL, PsbM, PsbT, PsbX, PsbY, Psb30/Ycf12, peripheral proteins PsbO, CyanoQ (PsbQ), PsbU, PsbV and a large number of cofactors. It forms dimeric complexes. The cofactor is heme b.

The protein localises to the cellular thylakoid membrane. Functionally, this b-type cytochrome is tightly associated with the reaction center of photosystem II (PSII). PSII is a light-driven water:plastoquinone oxidoreductase that uses light energy to abstract electrons from H(2)O, generating O(2) and a proton gradient subsequently used for ATP formation. It consists of a core antenna complex that captures photons, and an electron transfer chain that converts photonic excitation into a charge separation. The protein is Cytochrome b559 subunit alpha of Prochlorococcus marinus (strain NATL1A).